Reading from the N-terminus, the 413-residue chain is Tyrosine--tRNA ligase (413 aa).

The 'HIGH' region motif lies at 59–68 (PTAPDIHLGH). A 'KMSKS' region motif is present at residues 243–247 (KMSKS). K246 is an ATP binding site. One can recognise an S4 RNA-binding domain in the interval 351 to 411 (LAIGQLLKQA…GKRRFARVTL (61 aa)).

This sequence belongs to the class-I aminoacyl-tRNA synthetase family. TyrS type 2 subfamily. Homodimer.

The protein localises to the cytoplasm. The enzyme catalyses tRNA(Tyr) + L-tyrosine + ATP = L-tyrosyl-tRNA(Tyr) + AMP + diphosphate + H(+). In terms of biological role, catalyzes the attachment of tyrosine to tRNA(Tyr) in a two-step reaction: tyrosine is first activated by ATP to form Tyr-AMP and then transferred to the acceptor end of tRNA(Tyr). This Burkholderia mallei (strain ATCC 23344) protein is Tyrosine--tRNA ligase.